A 462-amino-acid chain; its full sequence is Hydroxymethylglutaryl-CoA synthase (462 aa).

The active-site Proton donor/acceptor is the E92. The active-site Acyl-thioester intermediate is C124. 7 residues coordinate (3S)-3-hydroxy-3-methylglutaryl-CoA: C124, T167, S219, H257, K266, N327, and S360. H257 (proton donor/acceptor) is an active-site residue. A Glycyl lysine isopeptide (Lys-Gly) (interchain with G-Cter in SUMO) cross-link involves residue K408.

This sequence belongs to the thiolase-like superfamily. HMG-CoA synthase family. Post-translationally, ubiquitinated.

The catalysed reaction is acetoacetyl-CoA + acetyl-CoA + H2O = (3S)-3-hydroxy-3-methylglutaryl-CoA + CoA + H(+). Its pathway is metabolic intermediate biosynthesis; (R)-mevalonate biosynthesis; (R)-mevalonate from acetyl-CoA: step 2/3. Its function is as follows. This enzyme condenses acetyl-CoA with acetoacetyl-CoA to form HMG-CoA, which is the substrate for HMG-CoA reductase. This chain is Hydroxymethylglutaryl-CoA synthase, found in Caenorhabditis elegans.